A 451-amino-acid chain; its full sequence is Protein FAM117A (451 aa).

The span at 1 to 25 (MSGAAAGGRGGGSWGPGRGGAGGLR) shows a compositional bias: gly residues. Disordered regions lie at residues 1–83 (MSGA…RPQP) and 164–183 (RTKL…VQGD). Phosphoserine occurs at positions 29 and 67. A coiled-coil region spans residues 149-175 (TDHRKEITKLKQQLQRTKLSRSGKEKE). Phosphoserine occurs at positions 193 and 213. The interval 242-293 (DGHRAPAPPQNSSCDHSLLLEPGNLTSSPSVPLASPQPPSQASREEHQGATE) is disordered. Phosphoserine occurs at positions 318 and 326. Threonine 353 carries the post-translational modification Phosphothreonine. Positions 403–451 (SPGSPLPTASPRAPRKGPEASKASSLPSEPWQRSPPSEESVLFQSSLVV) are disordered. 2 positions are modified to phosphoserine: serine 412 and serine 426. Residues 436–451 (SPPSEESVLFQSSLVV) show a composition bias toward polar residues.

This sequence belongs to the FAM117 family.

The chain is Protein FAM117A (Fam117a) from Mus musculus (Mouse).